A 204-amino-acid polypeptide reads, in one-letter code: Glycerol-3-phosphate acyltransferase (204 aa).

The next 5 helical transmembrane spans lie at 8-28, 53-73, 81-101, 116-136, and 155-175; these read ILIF…CYIF, VPAA…VVIA, FITA…IFFG, FGFS…VAII, and VIFT…IIIL.

This sequence belongs to the PlsY family. Probably interacts with PlsX.

It is found in the cell inner membrane. It catalyses the reaction an acyl phosphate + sn-glycerol 3-phosphate = a 1-acyl-sn-glycero-3-phosphate + phosphate. It functions in the pathway lipid metabolism; phospholipid metabolism. Its function is as follows. Catalyzes the transfer of an acyl group from acyl-phosphate (acyl-PO(4)) to glycerol-3-phosphate (G3P) to form lysophosphatidic acid (LPA). This enzyme utilizes acyl-phosphate as fatty acyl donor, but not acyl-CoA or acyl-ACP. The protein is Glycerol-3-phosphate acyltransferase of Francisella tularensis subsp. mediasiatica (strain FSC147).